A 261-amino-acid polypeptide reads, in one-letter code: Ribosomal RNA small subunit methyltransferase J (261 aa).

Residues 109-110 (RD), 125-126 (ER), and Asp179 contribute to the S-adenosyl-L-methionine site.

It belongs to the methyltransferase superfamily. RsmJ family.

The protein resides in the cytoplasm. It catalyses the reaction guanosine(1516) in 16S rRNA + S-adenosyl-L-methionine = N(2)-methylguanosine(1516) in 16S rRNA + S-adenosyl-L-homocysteine + H(+). Its function is as follows. Specifically methylates the guanosine in position 1516 of 16S rRNA. This chain is Ribosomal RNA small subunit methyltransferase J, found in Pseudomonas aeruginosa (strain UCBPP-PA14).